Here is a 156-residue protein sequence, read N- to C-terminus: Small ribosomal subunit protein uS7 (156 aa).

Belongs to the universal ribosomal protein uS7 family. In terms of assembly, part of the 30S ribosomal subunit. Contacts proteins S9 and S11.

Its function is as follows. One of the primary rRNA binding proteins, it binds directly to 16S rRNA where it nucleates assembly of the head domain of the 30S subunit. Is located at the subunit interface close to the decoding center, probably blocks exit of the E-site tRNA. The protein is Small ribosomal subunit protein uS7 of Edwardsiella ictaluri (strain 93-146).